A 464-amino-acid polypeptide reads, in one-letter code: Bifunctional protein GlmU (464 aa).

Residues 1–231 are pyrophosphorylase; the sequence is MDVVIMAAGK…ATQVAGVNSP (231 aa). Residues K20, Q78, 83–84, 105–107, G142, E156, and N229 contribute to the UDP-N-acetyl-alpha-D-glucosamine site; these read GT and SGD. D107 contacts Mg(2+). N229 is a Mg(2+) binding site. The interval 232–252 is linker; that stretch reads VQLAALERAFQSKVALQLMEQ. The N-acetyltransferase stretch occupies residues 253–464; that stretch reads GVRLADPARL…SIANWKRPSK (212 aa). Residues R343 and K361 each contribute to the UDP-N-acetyl-alpha-D-glucosamine site. The active-site Proton acceptor is H373. UDP-N-acetyl-alpha-D-glucosamine contacts are provided by Y376 and N387. Residues A390, 396–397, S415, G433, and R450 each bind acetyl-CoA; that span reads NY.

This sequence in the N-terminal section; belongs to the N-acetylglucosamine-1-phosphate uridyltransferase family. The protein in the C-terminal section; belongs to the transferase hexapeptide repeat family. Homotrimer. It depends on Mg(2+) as a cofactor.

It localises to the cytoplasm. The enzyme catalyses alpha-D-glucosamine 1-phosphate + acetyl-CoA = N-acetyl-alpha-D-glucosamine 1-phosphate + CoA + H(+). The catalysed reaction is N-acetyl-alpha-D-glucosamine 1-phosphate + UTP + H(+) = UDP-N-acetyl-alpha-D-glucosamine + diphosphate. It functions in the pathway nucleotide-sugar biosynthesis; UDP-N-acetyl-alpha-D-glucosamine biosynthesis; N-acetyl-alpha-D-glucosamine 1-phosphate from alpha-D-glucosamine 6-phosphate (route II): step 2/2. The protein operates within nucleotide-sugar biosynthesis; UDP-N-acetyl-alpha-D-glucosamine biosynthesis; UDP-N-acetyl-alpha-D-glucosamine from N-acetyl-alpha-D-glucosamine 1-phosphate: step 1/1. Its pathway is bacterial outer membrane biogenesis; LPS lipid A biosynthesis. Functionally, catalyzes the last two sequential reactions in the de novo biosynthetic pathway for UDP-N-acetylglucosamine (UDP-GlcNAc). The C-terminal domain catalyzes the transfer of acetyl group from acetyl coenzyme A to glucosamine-1-phosphate (GlcN-1-P) to produce N-acetylglucosamine-1-phosphate (GlcNAc-1-P), which is converted into UDP-GlcNAc by the transfer of uridine 5-monophosphate (from uridine 5-triphosphate), a reaction catalyzed by the N-terminal domain. This is Bifunctional protein GlmU from Albidiferax ferrireducens (strain ATCC BAA-621 / DSM 15236 / T118) (Rhodoferax ferrireducens).